Here is a 635-residue protein sequence, read N- to C-terminus: Probable Xaa-Pro aminopeptidase P (635 aa).

Residues aspartate 432, aspartate 443, glutamate 541, and glutamate 555 each coordinate Mn(2+).

It belongs to the peptidase M24B family. It depends on Mn(2+) as a cofactor.

The catalysed reaction is Release of any N-terminal amino acid, including proline, that is linked to proline, even from a dipeptide or tripeptide.. In terms of biological role, catalyzes the removal of a penultimate prolyl residue from the N-termini of peptides. The sequence is that of Probable Xaa-Pro aminopeptidase P (AMPP) from Arthroderma gypseum (strain ATCC MYA-4604 / CBS 118893) (Microsporum gypseum).